A 512-amino-acid chain; its full sequence is Multidrug resistance protein 3 (512 aa).

A run of 14 helical transmembrane segments spans residues 13 to 33 (FVVL…TIVA), 48 to 68 (KFAW…PIYG), 79 to 99 (FFLF…IAQT), 109 to 129 (IQGI…FDLF), 139 to 159 (GMFG…GAII), 163 to 183 (ISWH…LFFI), 200 to 220 (WGGA…LELG), 228 to 248 (SIQI…FFIV), 272 to 292 (ILAF…PIFV), 304 to 324 (GFIL…GGIF), 333 to 353 (LMLI…NMTP), 358 to 378 (VWLT…FSLL), 399 to 421 (SFLR…TNVF), and 475 to 495 (ITYV…TILF).

It belongs to the major facilitator superfamily. EmrB family.

The protein resides in the cell membrane. Its function is as follows. Confers resistance to puromycin, tosufloxacin and norfloxacin. The protein is Multidrug resistance protein 3 (bmr3) of Bacillus subtilis (strain 168).